The chain runs to 1392 residues: Ankyrin repeat domain-containing protein 30B (1392 aa).

Residues 1-21 form a disordered region; the sequence is MKRLLAAAGKGVRGPEPPNPF. ANK repeat units lie at residues 72-101, 105-134, 138-167, 171-200, and 204-233; these read KKRTALHWACVNGHAEVVTFLVDRKCQLNV, EGRTPLMKALQCEREACANILIDAGADLNY, YGNTALHYAVYSENLLMVATLLSYGAVIEV, ASLTPLLLAIQKRSKQTVEFLLTKNANANA, and SKCTALMLAICEGSSEIVGMLLQQNVDVFA. 6 disordered regions span residues 265 to 292, 558 to 587, 636 to 656, 671 to 690, 830 to 877, and 904 to 926; these read PKNPQNTNPEGTSTGTPDEAAPLAERTP, AQMFPSESKQKDDEENSWDSESPCETVSQK, DRETFKAESPDKDGLLKPTCG, RETLKAESPDNDGLLKPTCG, KEGA…SDSE, and GKIEESPEKPSHFEPATEMQNSV. Polar residues-rich tracts occupy residues 267-280 and 576-586; these read NPQNTNPEGTSTGT and DSESPCETVSQ. The span at 636–650 shows a compositional bias: basic and acidic residues; sequence DRETFKAESPDKDGL. Over residues 830 to 840 the composition is skewed to polar residues; the sequence is KEGATKTVTGQ. 2 stretches are compositionally biased toward basic and acidic residues: residues 864–874 and 904–915; these read LGRKEDTKSTS and GKIEESPEKPSH. Coiled-coil stretches lie at residues 960-1168 and 1270-1318; these read RELK…KQDK and ETQC…QQLV.

In terms of tissue distribution, expressed in brain, breast and testis.

This chain is Ankyrin repeat domain-containing protein 30B (ANKRD30B), found in Homo sapiens (Human).